The following is a 253-amino-acid chain: Phosphoadenosine 5'-phosphosulfate reductase (253 aa).

Cysteine 239 functions as the Nucleophile; cysteine thiosulfonate intermediate in the catalytic mechanism.

The protein belongs to the PAPS reductase family. CysH subfamily.

The protein localises to the cytoplasm. The catalysed reaction is [thioredoxin]-disulfide + sulfite + adenosine 3',5'-bisphosphate + 2 H(+) = [thioredoxin]-dithiol + 3'-phosphoadenylyl sulfate. It participates in sulfur metabolism; hydrogen sulfide biosynthesis; sulfite from sulfate: step 3/3. Catalyzes the formation of sulfite from phosphoadenosine 5'-phosphosulfate (PAPS) using thioredoxin as an electron donor. This Aliivibrio fischeri (strain ATCC 700601 / ES114) (Vibrio fischeri) protein is Phosphoadenosine 5'-phosphosulfate reductase.